We begin with the raw amino-acid sequence, 456 residues long: Adenylosuccinate lyase (456 aa).

N(6)-(1,2-dicarboxyethyl)-AMP is bound by residues 15 to 16, 90 to 92, and 122 to 123; these read RY, NHD, and TS. The Proton donor/acceptor role is filled by His171. Gln247 contributes to the N(6)-(1,2-dicarboxyethyl)-AMP binding site. Residue Ser295 is the Proton donor/acceptor of the active site. N(6)-(1,2-dicarboxyethyl)-AMP contacts are provided by residues Ser296, 301–303, Asn309, Arg335, and 340–344; these read KVN and STVLR.

It belongs to the lyase 1 family. Adenylosuccinate lyase subfamily. As to quaternary structure, homotetramer. Residues from neighboring subunits contribute catalytic and substrate-binding residues to each active site.

It carries out the reaction N(6)-(1,2-dicarboxyethyl)-AMP = fumarate + AMP. It catalyses the reaction (2S)-2-[5-amino-1-(5-phospho-beta-D-ribosyl)imidazole-4-carboxamido]succinate = 5-amino-1-(5-phospho-beta-D-ribosyl)imidazole-4-carboxamide + fumarate. It participates in purine metabolism; AMP biosynthesis via de novo pathway; AMP from IMP: step 2/2. The protein operates within purine metabolism; IMP biosynthesis via de novo pathway; 5-amino-1-(5-phospho-D-ribosyl)imidazole-4-carboxamide from 5-amino-1-(5-phospho-D-ribosyl)imidazole-4-carboxylate: step 2/2. Catalyzes two reactions in de novo purine nucleotide biosynthesis. Catalyzes the breakdown of 5-aminoimidazole- (N-succinylocarboxamide) ribotide (SAICAR or 2-[5-amino-1-(5-phospho-beta-D-ribosyl)imidazole-4-carboxamido]succinate) to 5-aminoimidazole-4-carboxamide ribotide (AICAR or 5-amino-1-(5-phospho-beta-D-ribosyl)imidazole-4-carboxamide) and fumarate, and of adenylosuccinate (ADS or N(6)-(1,2-dicarboxyethyl)-AMP) to adenosine monophosphate (AMP) and fumarate. The protein is Adenylosuccinate lyase (purB) of Buchnera aphidicola subsp. Acyrthosiphon pisum (strain APS) (Acyrthosiphon pisum symbiotic bacterium).